The sequence spans 242 residues: Triosephosphate isomerase (242 aa).

Residue 9 to 11 (NWK) coordinates substrate. H90 acts as the Electrophile in catalysis. The active-site Proton acceptor is E162. Substrate contacts are provided by residues G168, S205, and 226–227 (GG).

It belongs to the triosephosphate isomerase family. Homodimer.

The protein localises to the cytoplasm. It carries out the reaction D-glyceraldehyde 3-phosphate = dihydroxyacetone phosphate. The protein operates within carbohydrate biosynthesis; gluconeogenesis. Its pathway is carbohydrate degradation; glycolysis; D-glyceraldehyde 3-phosphate from glycerone phosphate: step 1/1. Functionally, involved in the gluconeogenesis. Catalyzes stereospecifically the conversion of dihydroxyacetone phosphate (DHAP) to D-glyceraldehyde-3-phosphate (G3P). The sequence is that of Triosephosphate isomerase from Azoarcus sp. (strain BH72).